The following is a 372-amino-acid chain: Glutamate 5-kinase (372 aa).

Lys14 is an ATP binding site. Residues Ser54, Asp141, and Asn153 each contribute to the substrate site. Residues 173-174 and 215-221 each bind ATP; these read TD and TGGMSTK. The PUA domain maps to 280–358; that stretch reads QGSLVLDAGA…DEIESVLGYD (79 aa).

It belongs to the glutamate 5-kinase family.

The protein localises to the cytoplasm. The enzyme catalyses L-glutamate + ATP = L-glutamyl 5-phosphate + ADP. Its pathway is amino-acid biosynthesis; L-proline biosynthesis; L-glutamate 5-semialdehyde from L-glutamate: step 1/2. Its function is as follows. Catalyzes the transfer of a phosphate group to glutamate to form L-glutamate 5-phosphate. This chain is Glutamate 5-kinase, found in Shewanella oneidensis (strain ATCC 700550 / JCM 31522 / CIP 106686 / LMG 19005 / NCIMB 14063 / MR-1).